The following is a 215-amino-acid chain: Cytochrome b6 (215 aa).

A helical membrane pass occupies residues 32–52 (IFYCLGGITLTCFLVQVATGF). Residue cysteine 35 coordinates heme c. Positions 86 and 100 each coordinate heme b. 3 helical membrane passes run 90–110 (ASMMVLMMILHVFRVYLTGGF), 116–136 (LTWVTGVVLAVLTASFGVTGY), and 186–206 (LHTFVLPLLTAVFMLMHFPMI). The heme b site is built by histidine 187 and histidine 202.

Belongs to the cytochrome b family. PetB subfamily. The 4 large subunits of the cytochrome b6-f complex are cytochrome b6, subunit IV (17 kDa polypeptide, PetD), cytochrome f and the Rieske protein, while the 4 small subunits are PetG, PetL, PetM and PetN. The complex functions as a dimer. Requires heme b as cofactor. The cofactor is heme c.

The protein localises to the plastid. The protein resides in the chloroplast thylakoid membrane. In terms of biological role, component of the cytochrome b6-f complex, which mediates electron transfer between photosystem II (PSII) and photosystem I (PSI), cyclic electron flow around PSI, and state transitions. The protein is Cytochrome b6 of Cucumis sativus (Cucumber).